The primary structure comprises 533 residues: Phosphatidylinositol 4-kinase gamma 8 (533 aa).

Positions 101-397 constitute a PI3K/PI4K catalytic domain; that stretch reads GAQPLLLPSG…AVSGSDDDDD (297 aa). The tract at residues 107-113 is G-loop; that stretch reads LPSGLGG. ATP contacts are provided by residues 108-114, lysine 129, and 210-213; these read PSGLGGA and QRFV. The catalytic loop stretch occupies residues 243–251; it reads LNLDRHAGN. An activation loop region spans residues 276–302; it reads PIDHGLCLPECLDDPYFEWLNWPQASV. Residue aspartate 278 coordinates ATP.

This sequence belongs to the PI3/PI4-kinase family. Type II PI4K subfamily.

The enzyme catalyses a 1,2-diacyl-sn-glycero-3-phospho-(1D-myo-inositol) + ATP = a 1,2-diacyl-sn-glycero-3-phospho-(1D-myo-inositol 4-phosphate) + ADP + H(+). In terms of biological role, the phosphorylation of phosphatidylinositol (PI) to PI4P is the first committed step in the generation of phosphatidylinositol 4,5-bisphosphate (PIP2), a precursor of the second messenger inositol 1,4,5-trisphosphate (InsP3). The protein is Phosphatidylinositol 4-kinase gamma 8 (PI4KG8) of Arabidopsis thaliana (Mouse-ear cress).